The primary structure comprises 410 residues: Chaperonin GroEL (410 aa).

ATP contacts are provided by residues 29–32 (TAGP), K50, and 86–90 (DGTTT).

Belongs to the chaperonin (HSP60) family. As to quaternary structure, forms a cylinder of 14 subunits composed of two heptameric rings stacked back-to-back. Interacts with the co-chaperonin GroES.

The protein localises to the cytoplasm. The catalysed reaction is ATP + H2O + a folded polypeptide = ADP + phosphate + an unfolded polypeptide.. Its function is as follows. Together with its co-chaperonin GroES, plays an essential role in assisting protein folding. The GroEL-GroES system forms a nano-cage that allows encapsulation of the non-native substrate proteins and provides a physical environment optimized to promote and accelerate protein folding. The chain is Chaperonin GroEL from Ehrlichia canis.